Reading from the N-terminus, the 262-residue chain is 5-methyltetrahydrofolate:corrinoid/iron-sulfur protein co-methyltransferase (262 aa).

Residues 1 to 246 (MLIIGERING…ETAATAEILL (246 aa)) enclose the Pterin-binding domain. N96 and D160 together coordinate (6S)-5-methyl-5,6,7,8-tetrahydrofolate. K184 contacts Ca(2+). The (6S)-5-methyl-5,6,7,8-tetrahydrofolate site is built by N199, Q202, and R207. 202–203 (QN) contributes to the methylcob(III)alamin binding site. Residues G222 and D224 each coordinate Ca(2+).

This sequence belongs to the vitamin-B12 dependent methionine synthase family. In terms of assembly, heterohexamer composed of 2 subunits of AcsC, 2 subunits of AcsD and 2 subunits of AcsE. Ca(2+) serves as cofactor.

It catalyses the reaction methyl-Co(III)-[corrinoid Fe-S protein] + (6S)-5,6,7,8-tetrahydrofolate = Co(I)-[corrinoid Fe-S protein] + (6S)-5-methyl-5,6,7,8-tetrahydrofolate + H(+). In terms of biological role, methyltransferase that mediates the transfer of a N5-methyl group of (6S)-methyltetrahydrofolate to the 5-methoxybenzimidazolylcobamide cofactor of a corrinoid/Fe-S protein (AcsC/AcsD) in the anaerobic acetyl-CoA pathway (Wood-Ljungdahl pathway) of carbon monoxide and carbon dioxide fixation. The protein is 5-methyltetrahydrofolate:corrinoid/iron-sulfur protein co-methyltransferase (acsE) of Moorella thermoacetica (Clostridium thermoaceticum).